The primary structure comprises 308 residues: Porphobilinogen deaminase (308 aa).

Cys241 is subject to S-(dipyrrolylmethanemethyl)cysteine.

It belongs to the HMBS family. Monomer. It depends on dipyrromethane as a cofactor.

The catalysed reaction is 4 porphobilinogen + H2O = hydroxymethylbilane + 4 NH4(+). It participates in porphyrin-containing compound metabolism; protoporphyrin-IX biosynthesis; coproporphyrinogen-III from 5-aminolevulinate: step 2/4. Tetrapolymerization of the monopyrrole PBG into the hydroxymethylbilane pre-uroporphyrinogen in several discrete steps. The sequence is that of Porphobilinogen deaminase from Staphylococcus carnosus (strain TM300).